Consider the following 236-residue polypeptide: Probable pseudouridine-5'-phosphatase YKL033W-A (236 aa).

The protein belongs to the HAD-like hydrolase superfamily.

It carries out the reaction XMP + H2O = xanthosine + phosphate. It catalyses the reaction psi-UMP + H2O = pseudouridine + phosphate. Functionally, nucleotidase with XMP as the best in vitro substrate. Low catalytic efficiencies of YKL033W-A observed with XMP and other substrates suggest that these could be secondary activities for this protein, and its primary substrate is not yet identified. May possess pseudouridine 5'-phosphatase activity and together with dTTP/UTP pyrophosphatase YOR111W might constitute a pathway for the detoxification of pseudouridine 5'-triphosphate (Psi-UTP) and -monophosphate (Psi-UMP). The protein is Probable pseudouridine-5'-phosphatase YKL033W-A of Saccharomyces cerevisiae (strain ATCC 204508 / S288c) (Baker's yeast).